An 869-amino-acid polypeptide reads, in one-letter code: MPADTPAGSAPARFDPAQIEPKWRAAWDLAGTFTATPDPAKQKYYVLEMFPYPSGRIHMGHVRNYTMGDVIARYKASCGFSVLHPMGWDAFGMPAENAAMATGGHPKDWTYANIAEMRAQMKPLGLSIDWSREFATCDEAYYGQQQSMFLDFLEKGLVYRKNAVVNWDPVDMTVLANEQVIDGKGWRSGAEVERRELTQWFFKISDFADDLLSALDGLENWPEKVRLMQANWIGKSRGLEFAFARTDGGDPIPVYTTRPDTLMGASFVGISPGHPIAKALAAQRPEVADFLAEVARGGTTEAALETAPKLGFDTGITVRHPLDPNWELPVWIANFILMDYGTGAIFACPAHDQRDLDFCRKYDLPVIDTFFALDDPTPVGDTAFVPPKTEPVRWVEHFAGLDIATGQEAIEATIDFAEAAGWGRGVEQFRLRDWGLSRQRYWGCPIPVVHCDKCGVVPERKENLPIALPYDEDGRPIDFSIPGNPLDRHPSWRDCACPACGAPARRETDTMDTFVDSSWYFARFTAPRAETPTDPAEVGYWMNVDQYIGGVEHAILHLLYSRFFARAMHLCGHLPESAREPFDALFTQGMVTHAIYKTTGTDGRPVYHYPEEVETTEEGAVLKKTGAPVDIVPSAKMSKSKNNVVDPLAIIDAYGADTARWFVMSDSPPERDVEWTASGAEAAFKHLGRVWRLAEDLRRNAEEAATAGSAEEARALARASARAIAEVTAGIEGFAFNKSVAKLYEFTNTIQKSKAPRAEKRAALKTMAQLMSPMTPHLAEEVWSMLGGIGLVAEAPWPEADPALLVEDTVTLPIQINGKRRSELAVPKDMPREEVEKLALADAAVLKALAGGAPRKLIVVPGRIVNVVI.

The short motif at 51 to 61 (PYPSGRIHMGH) is the 'HIGH' region element. Residues 636–640 (KMSKS) carry the 'KMSKS' region motif. K639 is a binding site for ATP.

This sequence belongs to the class-I aminoacyl-tRNA synthetase family.

The protein resides in the cytoplasm. It carries out the reaction tRNA(Leu) + L-leucine + ATP = L-leucyl-tRNA(Leu) + AMP + diphosphate. This Dinoroseobacter shibae (strain DSM 16493 / NCIMB 14021 / DFL 12) protein is Leucine--tRNA ligase.